Here is a 265-residue protein sequence, read N- to C-terminus: Protein Pars_0096 (265 aa).

The protein belongs to the CinA family.

In Pyrobaculum arsenaticum (strain DSM 13514 / JCM 11321 / PZ6), this protein is Protein Pars_0096.